We begin with the raw amino-acid sequence, 221 residues long: 7-cyano-7-deazaguanine synthase (221 aa).

Residue phenylalanine 10 to leucine 20 coordinates ATP. Zn(2+) contacts are provided by cysteine 186, cysteine 195, cysteine 198, and cysteine 201.

Belongs to the QueC family. Homodimer. It depends on Zn(2+) as a cofactor.

It carries out the reaction 7-carboxy-7-deazaguanine + NH4(+) + ATP = 7-cyano-7-deazaguanine + ADP + phosphate + H2O + H(+). It participates in purine metabolism; 7-cyano-7-deazaguanine biosynthesis. Catalyzes the ATP-dependent conversion of 7-carboxy-7-deazaguanine (CDG) to 7-cyano-7-deazaguanine (preQ(0)). The sequence is that of 7-cyano-7-deazaguanine synthase from Geobacillus sp. (strain WCH70).